The chain runs to 588 residues: Lysine--tRNA ligase (588 aa).

The span at Met1–Leu10 shows a compositional bias: polar residues. Residues Met1–Pro54 form a disordered region. The segment covering Lys20 to Pro47 has biased composition (basic and acidic residues).

This sequence belongs to the class-II aminoacyl-tRNA synthetase family.

The protein localises to the cytoplasm. It carries out the reaction tRNA(Lys) + L-lysine + ATP = L-lysyl-tRNA(Lys) + AMP + diphosphate. In Solanum lycopersicum (Tomato), this protein is Lysine--tRNA ligase (LYSRS).